Consider the following 824-residue polypeptide: FT-interacting protein 1 (824 aa).

C2 domains lie at 48–170 (WLGL…PQWY), 217–341 (VRGE…SRWF), and 385–522 (YISD…THAY). 3 consecutive transmembrane segments (helical) span residues 625–645 (AVSL…VCHW), 657–677 (LLLI…LYMF), and 764–784 (ATCL…VTPF).

It belongs to the MCTP family. In terms of assembly, interacts with RFT1 and PI4KG4. Specifically expressed in the phloem including companion cells.

It localises to the endoplasmic reticulum membrane. Functionally, involved in the export of the long day-specific flower-promoting signal (florigen) RFT1 from the phloem companion cells to sieve elements. Promotes flowering under long days through the transport of RFT1 from the leaves to the shoot apical meristem (SAM). In Oryza sativa subsp. japonica (Rice), this protein is FT-interacting protein 1.